Consider the following 95-residue polypeptide: Aspartyl/glutamyl-tRNA(Asn/Gln) amidotransferase subunit C (95 aa).

It belongs to the GatC family. As to quaternary structure, heterotrimer of A, B and C subunits.

It carries out the reaction L-glutamyl-tRNA(Gln) + L-glutamine + ATP + H2O = L-glutaminyl-tRNA(Gln) + L-glutamate + ADP + phosphate + H(+). It catalyses the reaction L-aspartyl-tRNA(Asn) + L-glutamine + ATP + H2O = L-asparaginyl-tRNA(Asn) + L-glutamate + ADP + phosphate + 2 H(+). Allows the formation of correctly charged Asn-tRNA(Asn) or Gln-tRNA(Gln) through the transamidation of misacylated Asp-tRNA(Asn) or Glu-tRNA(Gln) in organisms which lack either or both of asparaginyl-tRNA or glutaminyl-tRNA synthetases. The reaction takes place in the presence of glutamine and ATP through an activated phospho-Asp-tRNA(Asn) or phospho-Glu-tRNA(Gln). The protein is Aspartyl/glutamyl-tRNA(Asn/Gln) amidotransferase subunit C of Citrifermentans bemidjiense (strain ATCC BAA-1014 / DSM 16622 / JCM 12645 / Bem) (Geobacter bemidjiensis).